The primary structure comprises 88 residues: Small ribosomal subunit protein bS20 (88 aa).

The interval Met-1 to Met-27 is disordered.

Belongs to the bacterial ribosomal protein bS20 family.

Functionally, binds directly to 16S ribosomal RNA. In Shewanella oneidensis (strain ATCC 700550 / JCM 31522 / CIP 106686 / LMG 19005 / NCIMB 14063 / MR-1), this protein is Small ribosomal subunit protein bS20.